A 98-amino-acid chain; its full sequence is NADH-ubiquinone oxidoreductase chain 4L (98 aa).

3 consecutive transmembrane segments (helical) span residues 1–21 (MPYI…GTLM), 29–49 (SLLC…LLSL), and 61–81 (LILL…LVMI).

The protein belongs to the complex I subunit 4L family. Core subunit of respiratory chain NADH dehydrogenase (Complex I) which is composed of 45 different subunits.

Its subcellular location is the mitochondrion inner membrane. It catalyses the reaction a ubiquinone + NADH + 5 H(+)(in) = a ubiquinol + NAD(+) + 4 H(+)(out). Its function is as follows. Core subunit of the mitochondrial membrane respiratory chain NADH dehydrogenase (Complex I) which catalyzes electron transfer from NADH through the respiratory chain, using ubiquinone as an electron acceptor. Part of the enzyme membrane arm which is embedded in the lipid bilayer and involved in proton translocation. The chain is NADH-ubiquinone oxidoreductase chain 4L (MT-ND4L) from Elephas maximus (Indian elephant).